The primary structure comprises 2327 residues: Pre-mRNA-processing-splicing factor 8 homolog (2327 aa).

The span at 1–14 shows a compositional bias: polar residues; that stretch reads MDDTNSNINQSNES. The interval 1 to 20 is disordered; that stretch reads MDDTNSNINQSNESQHLEEK. Residues 801-1292 form a reverse transcriptase homology domain region; it reads TTVHWLEKRR…KIQTRVKIGL (492 aa). The tract at residues 1293–1566 is linker; the sequence is NSKMPNRFPP…TLKISLIQIF (274 aa). The important for branch point selection stretch occupies residues 1502-1515; the sequence is MKYKKLTHAQRSGL. Residues 1570–1740 are restriction endonuclease homology domain; that stretch reads LWQKIHESLV…LRERIRKGLQ (171 aa). Residues 1657 to 2023 form an involved in interaction with pre-mRNA 5' splice site region; the sequence is GDFDSHDIER…QIAEIEKQKT (367 aa). The segment at 1755 to 2008 is RNase H homology domain; it reads NFGELFSNKI…ILGMEISAPS (254 aa). The region spanning 2093–2223 is the MPN domain; the sequence is TYVFPKNILK…LTAYHLTPSG (131 aa).

Part of the U5 snRNP complex and of the U4/U6-U5 tri-snRNP complex.

It localises to the nucleus speckle. In terms of biological role, functions as a scaffold that mediates the ordered assembly of spliceosomal proteins and snRNAs. Required for the assembly of the U4/U6-U5 tri-snRNP complex. Functions as a scaffold that positions spliceosomal U2, U5 and U6 snRNAs at splice sites on pre-mRNA substrates, so that splicing can occur. Interacts with both the 5' and the 3' splice site. This chain is Pre-mRNA-processing-splicing factor 8 homolog (prpf8), found in Dictyostelium discoideum (Social amoeba).